The chain runs to 192 residues: Density-regulated protein homolog (192 aa).

Residues 62 to 116 (GLEISDEPAADGDEKKKQKRGGKGSKTGAAAAQAAASGGKKKGGGPQKVTLQREP) are disordered. Over residues 87 to 99 (KTGAAAAQAAASG) the composition is skewed to low complexity. The 60-residue stretch at 117-176 (RGKKSVTVIKGLATFDIDLKVASKLFAQKFACGSSVTGADEIVIQGDVKDDLLDLIPEKW) folds into the SUI1 domain.

It belongs to the DENR family.

The protein is Density-regulated protein homolog of Caenorhabditis elegans.